The sequence spans 143 residues: D-aminoacyl-tRNA deacylase (143 aa).

The short motif at 135 to 136 is the Gly-cisPro motif, important for rejection of L-amino acids element; sequence GP.

This sequence belongs to the DTD family. As to quaternary structure, homodimer.

It is found in the cytoplasm. It carries out the reaction glycyl-tRNA(Ala) + H2O = tRNA(Ala) + glycine + H(+). It catalyses the reaction a D-aminoacyl-tRNA + H2O = a tRNA + a D-alpha-amino acid + H(+). An aminoacyl-tRNA editing enzyme that deacylates mischarged D-aminoacyl-tRNAs. Also deacylates mischarged glycyl-tRNA(Ala), protecting cells against glycine mischarging by AlaRS. Acts via tRNA-based rather than protein-based catalysis; rejects L-amino acids rather than detecting D-amino acids in the active site. By recycling D-aminoacyl-tRNA to D-amino acids and free tRNA molecules, this enzyme counteracts the toxicity associated with the formation of D-aminoacyl-tRNA entities in vivo and helps enforce protein L-homochirality. The sequence is that of D-aminoacyl-tRNA deacylase from Mycolicibacterium gilvum (strain PYR-GCK) (Mycobacterium gilvum (strain PYR-GCK)).